The following is a 428-amino-acid chain: Adenylosuccinate synthetase 1 (428 aa).

Residues 12-18 (GDEGKGK) and 40-42 (GHT) contribute to the GTP site. The Proton acceptor role is filled by D13. 2 residues coordinate Mg(2+): D13 and G40. Residues 13 to 16 (DEGK), 38 to 41 (NAGH), T133, R147, N224, T239, and R303 each bind IMP. H41 functions as the Proton donor in the catalytic mechanism. A substrate-binding site is contributed by 299 to 305 (TTTGRRR). Residues R305, 331–333 (KLD), and 413–415 (GVG) contribute to the GTP site.

It belongs to the adenylosuccinate synthetase family. In terms of assembly, homodimer. It depends on Mg(2+) as a cofactor.

The protein localises to the cytoplasm. The catalysed reaction is IMP + L-aspartate + GTP = N(6)-(1,2-dicarboxyethyl)-AMP + GDP + phosphate + 2 H(+). It participates in purine metabolism; AMP biosynthesis via de novo pathway; AMP from IMP: step 1/2. Functionally, plays an important role in the de novo pathway and in the salvage pathway of purine nucleotide biosynthesis. Catalyzes the first committed step in the biosynthesis of AMP from IMP. The polypeptide is Adenylosuccinate synthetase 1 (Laccaria bicolor (strain S238N-H82 / ATCC MYA-4686) (Bicoloured deceiver)).